A 548-amino-acid polypeptide reads, in one-letter code: Chaperonin GroEL (548 aa).

ATP-binding positions include 30–33 (TLGP), lysine 51, 87–91 (DGTTT), glycine 415, and aspartate 494.

Belongs to the chaperonin (HSP60) family. As to quaternary structure, forms a cylinder of 14 subunits composed of two heptameric rings stacked back-to-back. Interacts with the co-chaperonin GroES.

It localises to the cytoplasm. The catalysed reaction is ATP + H2O + a folded polypeptide = ADP + phosphate + an unfolded polypeptide.. Together with its co-chaperonin GroES, plays an essential role in assisting protein folding. The GroEL-GroES system forms a nano-cage that allows encapsulation of the non-native substrate proteins and provides a physical environment optimized to promote and accelerate protein folding. The protein is Chaperonin GroEL of Oleispira antarctica.